The following is a 495-amino-acid chain: Pentatricopeptide repeat-containing protein PPR5 homolog, chloroplastic (495 aa).

The segment at 1–24 (MLAYPTTSSPWPPRHHGAAAAPAA) is disordered. Residues 1-29 (MLAYPTTSSPWPPRHHGAAAAPAARRHMA) constitute a chloroplast transit peptide. 9 PPR repeats span residues 120–154 (DNGI…GCRP), 155–189 (DTSV…MKTI), 195–229 (NIVT…PVSP), 230–264 (DIYT…QCRP), 265–299 (DVIT…KEKP), 300–334 (THPT…GFKP), 335–365 (NYVT…LVSS), 370–404 (HLSS…GAVP), and 405–439 (SAST…GIVP). Positions 455 to 495 (DKKPRTVPSKNSASKPDVESANNSGTDTSSKPNLSVWQVAA) are disordered. The segment covering 462–495 (PSKNSASKPDVESANNSGTDTSSKPNLSVWQVAA) has biased composition (polar residues).

The protein belongs to the PPR family. P subfamily.

Its subcellular location is the plastid. It is found in the chloroplast. Its function is as follows. Involved in the biogenesis of the plastid translation machinery by promoting the splicing of group II introns in chloroplasts. In Oryza sativa subsp. japonica (Rice), this protein is Pentatricopeptide repeat-containing protein PPR5 homolog, chloroplastic.